We begin with the raw amino-acid sequence, 515 residues long: Maturase K (515 aa).

It belongs to the intron maturase 2 family. MatK subfamily.

It is found in the plastid. Its subcellular location is the chloroplast. Its function is as follows. Usually encoded in the trnK tRNA gene intron. Probably assists in splicing its own and other chloroplast group II introns. The polypeptide is Maturase K (Pseudotsuga menziesii (Douglas-fir)).